The sequence spans 206 residues: Small ribosomal subunit protein uS4 (206 aa).

Positions 96-156 constitute an S4 RNA-binding domain; the sequence is GRLDNVVYRM…EKAKKQARIK (61 aa).

The protein belongs to the universal ribosomal protein uS4 family. In terms of assembly, part of the 30S ribosomal subunit. Contacts protein S5. The interaction surface between S4 and S5 is involved in control of translational fidelity.

One of the primary rRNA binding proteins, it binds directly to 16S rRNA where it nucleates assembly of the body of the 30S subunit. Its function is as follows. With S5 and S12 plays an important role in translational accuracy. The chain is Small ribosomal subunit protein uS4 from Tolumonas auensis (strain DSM 9187 / NBRC 110442 / TA 4).